Consider the following 563-residue polypeptide: Inositol-3-phosphate synthase 1-A (563 aa).

The protein belongs to the myo-inositol 1-phosphate synthase family. It depends on NAD(+) as a cofactor.

Its subcellular location is the cytoplasm. It carries out the reaction D-glucose 6-phosphate = 1D-myo-inositol 3-phosphate. The protein operates within polyol metabolism; myo-inositol biosynthesis; myo-inositol from D-glucose 6-phosphate: step 1/2. Functionally, key enzyme in myo-inositol biosynthesis pathway that catalyzes the conversion of glucose 6-phosphate to 1-myo-inositol 1-phosphate in a NAD-dependent manner. Rate-limiting enzyme in the synthesis of all inositol-containing compounds. This is Inositol-3-phosphate synthase 1-A (isyna1-a) from Xenopus laevis (African clawed frog).